The primary structure comprises 204 residues: Pneumococcal vaccine antigen A (204 aa).

Its subcellular location is the cell surface. The chain is Pneumococcal vaccine antigen A (pvaA) from Streptococcus pneumoniae serotype 4 (strain ATCC BAA-334 / TIGR4).